A 339-amino-acid chain; its full sequence is Uroporphyrinogen decarboxylase (339 aa).

Substrate is bound by residues 23-27 (RQAGR), D72, Y147, S202, and H315.

This sequence belongs to the uroporphyrinogen decarboxylase family. In terms of assembly, homodimer.

The protein localises to the cytoplasm. It carries out the reaction uroporphyrinogen III + 4 H(+) = coproporphyrinogen III + 4 CO2. It participates in porphyrin-containing compound metabolism; protoporphyrin-IX biosynthesis; coproporphyrinogen-III from 5-aminolevulinate: step 4/4. In terms of biological role, catalyzes the decarboxylation of four acetate groups of uroporphyrinogen-III to yield coproporphyrinogen-III. The protein is Uroporphyrinogen decarboxylase of Desulfotalea psychrophila (strain LSv54 / DSM 12343).